The chain runs to 576 residues: RING finger and SPRY domain-containing protein 1 (576 aa).

A signal peptide spans 1–16; the sequence is MIVLGWAVFLASRSLG. S50 carries the phosphoserine modification. Residues 50-99 are disordered; the sequence is SGTDDSVDTQQQQAENSAVPTADTRSQPRDPVRPPRRGRGPHEPRRKKQN. Residues 57 to 68 show a composition bias toward polar residues; it reads DTQQQQAENSAV. A compositionally biased stretch (basic residues) spans 83–97; sequence PPRRGRGPHEPRRKK. A B30.2/SPRY domain is found at 300–483; the sequence is LFLKEGRQLT…CEFNFGAKPF (184 aa). Residue N314 is glycosylated (N-linked (GlcNAc...) asparagine). The RING-type zinc-finger motif lies at 527-562; sequence CSLCCDEVADTQLKPCGHSDLCMDCALQLETCPLCR.

The protein localises to the secreted. The polypeptide is RING finger and SPRY domain-containing protein 1 (RSPRY1) (Macaca fascicularis (Crab-eating macaque)).